A 58-amino-acid polypeptide reads, in one-letter code: Keratin-associated protein 21-3 (58 aa).

As to quaternary structure, interacts with hair keratins.

In the hair cortex, hair keratin intermediate filaments are embedded in an interfilamentous matrix, consisting of hair keratin-associated proteins (KRTAP), which are essential for the formation of a rigid and resistant hair shaft through their extensive disulfide bond cross-linking with abundant cysteine residues of hair keratins. The matrix proteins include the high-sulfur and high-glycine-tyrosine keratins. The protein is Keratin-associated protein 21-3 (KRTAP21-3) of Homo sapiens (Human).